We begin with the raw amino-acid sequence, 105 residues long: Large ribosomal subunit protein uL24 (105 aa).

The protein belongs to the universal ribosomal protein uL24 family. As to quaternary structure, part of the 50S ribosomal subunit.

One of two assembly initiator proteins, it binds directly to the 5'-end of the 23S rRNA, where it nucleates assembly of the 50S subunit. Its function is as follows. One of the proteins that surrounds the polypeptide exit tunnel on the outside of the subunit. In Methylococcus capsulatus (strain ATCC 33009 / NCIMB 11132 / Bath), this protein is Large ribosomal subunit protein uL24.